Consider the following 193-residue polypeptide: MAQNAKHRVPFRRRREGKTDFRQRLGLLLSGKPRLVARKSLNNIIAQLMAYDEKGDIVLVSAHSRELVKMGYKGHCGNLPAAYLTGLLLGKKAVEEGLEEAILDKGLHRATKGAAIFAVLKGALDAGMDIPCGEEIIADEERLNGTHIKQYAELLKEDEEAYKKQFSKYLEKGLNPEDLPEHFEELKGKILNL.

It belongs to the universal ribosomal protein uL18 family. Part of the 50S ribosomal subunit. Contacts the 5S and 23S rRNAs.

Functionally, this is one of the proteins that bind and probably mediate the attachment of the 5S RNA into the large ribosomal subunit, where it forms part of the central protuberance. This is Large ribosomal subunit protein uL18 from Methanococcus vannielii (strain ATCC 35089 / DSM 1224 / JCM 13029 / OCM 148 / SB).